A 459-amino-acid chain; its full sequence is Bifunctional protein GlmU (459 aa).

The interval M1–R229 is pyrophosphorylase. Residues L8–G11, K22, Q72, and G77–T78 each bind UDP-N-acetyl-alpha-D-glucosamine. Position 102 (D102) interacts with Mg(2+). UDP-N-acetyl-alpha-D-glucosamine-binding residues include G139, E154, N169, and N227. N227 provides a ligand contact to Mg(2+). Residues V230–N250 form a linker region. The N-acetyltransferase stretch occupies residues G251–K459. UDP-N-acetyl-alpha-D-glucosamine contacts are provided by R332 and K350. Catalysis depends on H362, which acts as the Proton acceptor. Residues Y365 and N376 each contribute to the UDP-N-acetyl-alpha-D-glucosamine site. Acetyl-CoA is bound by residues A379, N385–Y386, S404, A422, and R439.

This sequence in the N-terminal section; belongs to the N-acetylglucosamine-1-phosphate uridyltransferase family. The protein in the C-terminal section; belongs to the transferase hexapeptide repeat family. As to quaternary structure, homotrimer. Mg(2+) serves as cofactor.

The protein localises to the cytoplasm. It catalyses the reaction alpha-D-glucosamine 1-phosphate + acetyl-CoA = N-acetyl-alpha-D-glucosamine 1-phosphate + CoA + H(+). The catalysed reaction is N-acetyl-alpha-D-glucosamine 1-phosphate + UTP + H(+) = UDP-N-acetyl-alpha-D-glucosamine + diphosphate. It functions in the pathway nucleotide-sugar biosynthesis; UDP-N-acetyl-alpha-D-glucosamine biosynthesis; N-acetyl-alpha-D-glucosamine 1-phosphate from alpha-D-glucosamine 6-phosphate (route II): step 2/2. It participates in nucleotide-sugar biosynthesis; UDP-N-acetyl-alpha-D-glucosamine biosynthesis; UDP-N-acetyl-alpha-D-glucosamine from N-acetyl-alpha-D-glucosamine 1-phosphate: step 1/1. Its pathway is bacterial outer membrane biogenesis; LPS lipid A biosynthesis. Its function is as follows. Catalyzes the last two sequential reactions in the de novo biosynthetic pathway for UDP-N-acetylglucosamine (UDP-GlcNAc). The C-terminal domain catalyzes the transfer of acetyl group from acetyl coenzyme A to glucosamine-1-phosphate (GlcN-1-P) to produce N-acetylglucosamine-1-phosphate (GlcNAc-1-P), which is converted into UDP-GlcNAc by the transfer of uridine 5-monophosphate (from uridine 5-triphosphate), a reaction catalyzed by the N-terminal domain. This Streptococcus gordonii (strain Challis / ATCC 35105 / BCRC 15272 / CH1 / DL1 / V288) protein is Bifunctional protein GlmU.